Consider the following 351-residue polypeptide: Lipopolysaccharide core biosynthesis mannosyltransferase LpsB (351 aa).

This sequence belongs to the glycosyltransferase group 1 family. Glycosyltransferase 4 subfamily.

It participates in bacterial outer membrane biogenesis; LPS core biosynthesis. Its function is as follows. Acts at transfer of mannose group to a 3-deoxy-D-mono octulonic acid (KDO) via an alpha-1,5 linkage. In Rhizobium meliloti (strain 1021) (Ensifer meliloti), this protein is Lipopolysaccharide core biosynthesis mannosyltransferase LpsB (lpsB).